We begin with the raw amino-acid sequence, 404 residues long: Glucose-1-phosphate adenylyltransferase (404 aa).

Alpha-D-glucose 1-phosphate is bound by residues Tyr-99, Gly-164, 179-180, and Ser-197; that span reads EK.

It belongs to the bacterial/plant glucose-1-phosphate adenylyltransferase family.

It catalyses the reaction alpha-D-glucose 1-phosphate + ATP + H(+) = ADP-alpha-D-glucose + diphosphate. Its pathway is glycan biosynthesis; glycogen biosynthesis. Functionally, involved in the biosynthesis of ADP-glucose, a building block, required in the biosynthesis of maltose-1-phosphate (M1P) and in the elongation reactions to produce linear alpha-1,4-glucans. Catalyzes the reaction between ATP and alpha-D-glucose 1-phosphate (G1P) to produce pyrophosphate and ADP-Glc. This is Glucose-1-phosphate adenylyltransferase from Mycolicibacterium gilvum (strain PYR-GCK) (Mycobacterium gilvum (strain PYR-GCK)).